A 29-amino-acid chain; its full sequence is Dander allergen Equ c 2.0101 (29 aa).

The protein belongs to the calycin superfamily. Lipocalin family.

The protein localises to the secreted. The polypeptide is Dander allergen Equ c 2.0101 (Equus caballus (Horse)).